Reading from the N-terminus, the 810-residue chain is AMP deaminase (810 aa).

A compositionally biased stretch (polar residues) spans 1–10; it reads MDNQATQRLN. Disordered regions lie at residues 1 to 61 and 114 to 137; these read MDNQ…SHES and AAMN…PRTL. A phosphoserine mark is found at serine 19, serine 58, and serine 61. Over residues 125-137 the composition is skewed to polar residues; the sequence is HASQNSGGKPRTL. A Phosphoserine modification is found at serine 138. Residues histidine 362 and histidine 364 each coordinate Zn(2+). Residues histidine 364 and 433–438 each bind substrate; that span reads KFNLKY. Histidine 630 contacts Zn(2+). Glutamate 633 lines the substrate pocket. Histidine 652 (proton acceptor) is an active-site residue. Residue aspartate 707 participates in Zn(2+) binding. Position 708-711 (708-711) interacts with substrate; that stretch reads DPLQ.

This sequence belongs to the metallo-dependent hydrolases superfamily. Adenosine and AMP deaminases family. As to quaternary structure, homotetramer. It depends on Zn(2+) as a cofactor.

It carries out the reaction AMP + H2O + H(+) = IMP + NH4(+). Its pathway is purine metabolism; IMP biosynthesis via salvage pathway; IMP from AMP: step 1/1. Functionally, AMP deaminase plays a critical role in energy metabolism. In Saccharomyces cerevisiae (strain ATCC 204508 / S288c) (Baker's yeast), this protein is AMP deaminase (AMD1).